The chain runs to 37 residues: Mu-agatoxin-Aa1e (37 aa).

4 disulfide bridges follow: Cys-2/Cys-18, Cys-9/Cys-23, Cys-17/Cys-33, and Cys-25/Cys-31. At Asn-37 the chain carries Asparagine amide.

This sequence belongs to the neurotoxin 07 (Beta/delta-agtx) family. 03 (aga-4) subfamily. Aga sub-subfamily. As to expression, expressed by the venom gland.

It localises to the secreted. Its function is as follows. Insecticidal neurotoxin that induces an irreversible spastic paralysis when injected into insects. Modifies presynaptic voltage-gated sodium channels (Nav), causing them to open at the normal resting potential of the nerve. This leads to spontaneous release of neurotransmitter and repetitive action potentials in motor neurons. This Agelenopsis aperta (North American funnel-web spider) protein is Mu-agatoxin-Aa1e.